The primary structure comprises 226 residues: UPF0111 protein HI_1603 (226 aa).

This sequence belongs to the UPF0111 family.

The protein is UPF0111 protein HI_1603 of Haemophilus influenzae (strain ATCC 51907 / DSM 11121 / KW20 / Rd).